The following is a 135-amino-acid chain: Small ribosomal subunit protein uS11 (135 aa).

The tract at residues 1 to 26 (MPPKSRTAGGARKTRRKEKKNVSHGH) is disordered. Positions 12–23 (RKTRRKEKKNVS) are enriched in basic residues.

This sequence belongs to the universal ribosomal protein uS11 family. As to quaternary structure, part of the 30S ribosomal subunit. Interacts with proteins S7 and S18. Binds to IF-3.

In terms of biological role, located on the platform of the 30S subunit, it bridges several disparate RNA helices of the 16S rRNA. Forms part of the Shine-Dalgarno cleft in the 70S ribosome. This Beutenbergia cavernae (strain ATCC BAA-8 / DSM 12333 / CCUG 43141 / JCM 11478 / NBRC 16432 / NCIMB 13614 / HKI 0122) protein is Small ribosomal subunit protein uS11.